The primary structure comprises 394 residues: Cell division protein FtsZ (394 aa).

GTP-binding positions include 21 to 25 (GGGGN), 108 to 110 (GTG), glutamate 139, arginine 143, and aspartate 187.

It belongs to the FtsZ family. As to quaternary structure, homodimer. Polymerizes to form a dynamic ring structure in a strictly GTP-dependent manner. Interacts directly with several other division proteins.

Its subcellular location is the cytoplasm. Functionally, essential cell division protein that forms a contractile ring structure (Z ring) at the future cell division site. The regulation of the ring assembly controls the timing and the location of cell division. One of the functions of the FtsZ ring is to recruit other cell division proteins to the septum to produce a new cell wall between the dividing cells. Binds GTP and shows GTPase activity. The sequence is that of Cell division protein FtsZ from Azotobacter vinelandii.